Reading from the N-terminus, the 986-residue chain is MQRGIDSFFKRLPAKAKSAEAENGETPSKAPKRRKAVIISSDEDEVVSPPETKKRKASKTASSEDDVVAATPEPIAKKARNGQKPALSKLKRHVDPTELFGGETKRVIVPKPKTKAVLEFENEDIDRSLMEVDLDESIKEAAPEKKVHSITRSSPSPKRAKNSSPEPPKPKSTKSKATTPRVKKEKPAADLESSVLTDEERHERKRASAVLYQKYKNRSSCLNPGSKEIPKGSPDCLSGLTFVVTGVLESMEREEAESVIKEYGGKVMTVVGKKLKYLVVGEEAGPKKLAVAEELNIPILSEDGLFDLIREKSGIAKQVKEEKKSPKKEHSSEEKGKKEVKTSRRSSDKKEKEATKLKYGEKHDIAKHKVKEEHTSPKETKDKLNDVPAVTLKVKKEPSSQKEHPPSPRTADLKTLDVVGMAWVDKHKPTSIKEIVGQAGAASNVTKLMNWLSKWYVNHDGNKKPQRPNPWAKNDDGSFYKAALLSGPPGIGKTTTATLVVKELGFDAVEFNASDTRSKRLLKDEVSTLLSNKSLSGYFTGQGQAVSRKHVLIMDEVDGMAGNEDRGGMQELIALIKDSSIPIICMCNDRNHPKIRSLVNYCYDLRFQRPRLEQIKGKIMSICFKEKVKISPAKVEEIIAATNNDIRQSINHIALLSAKEDASQKSGQQVATKDLKLGPWEVVRKVFTADEHKHMSFADKSDLFFHDYSLAPLFVQQNYLQVLPQGNKKDVLAKVAATADALSLGDLVEKRIRANSAWSLLPTQAFFSSVLPGEHMCGHFTGQINFPGWLGKNSKSGKRARLAQELHDHTRVCTSGSRLSVRLDYAPFLLDNIVRPLAKDGQEGVPAALDVMKDYHLLREDLDSLVELTSWPGKKSPLDAVDGRVKAALTRSYNKEVMAYSYSAQAGIKKKKSEAAGADDDYLDEGPGEEDGAGGHLSSEEDEDKDNLELDSLIKAKKRTTTSKASGGSKKATSSTASKSKAKAKK.

The disordered stretch occupies residues 1-95 (MQRGIDSFFK…ALSKLKRHVD (95 aa)). Phosphoserine is present on residues S18, S28, S40, S41, S48, and S58. T60 is modified (phosphothreonine). Phosphoserine is present on residues S62 and S63. T71 bears the Phosphothreonine mark. S128, S137, S149, S154, S156, S164, and S194 each carry phosphoserine. Residues 136–147 (ESIKEAAPEKKV) show a composition bias toward basic and acidic residues. Disordered stretches follow at residues 136–203 (ESIK…ERHE) and 317–388 (KQVK…NDVP). T197 is modified (phosphothreonine). Residues 232-322 (GSPDCLSGLT…SGIAKQVKEE (91 aa)) enclose the BRCT domain. 2 stretches are compositionally biased toward basic and acidic residues: residues 317 to 364 (KQVK…EKHD) and 370 to 385 (VKEE…DKLN). Residue 487–494 (GPPGIGKT) coordinates ATP. The disordered stretch occupies residues 913-986 (SEAAGADDDY…ASKSKAKAKK (74 aa)). Acidic residues predominate over residues 917–932 (GADDDYLDEGPGEEDG). 2 positions are modified to phosphoserine: S938 and S939. The Nuclear localization signal signature appears at 955–959 (KAKKR). Residues 962 to 979 (TSKASGGSKKATSSTASK) show a composition bias toward low complexity.

It belongs to the activator 1 large subunit family. Interacts with C-terminus of PCNA.

Its subcellular location is the nucleus. Functionally, the elongation of primed DNA templates by DNA polymerase delta and epsilon requires the action of the accessory proteins proliferating cell nuclear antigen (PCNA) and activator 1. This subunit binds to the primer-template junction. The polypeptide is Replication factor C subunit 1 (Gnf1) (Drosophila melanogaster (Fruit fly)).